A 697-amino-acid polypeptide reads, in one-letter code: MSHSPNLSPQISNDIIDADTTSLASTETQQNIQHSQIHPIGHHGREQSEEPQNTTKTTTTTTNKIHTTTPSVDPDLGPLRELEQDLSSLESQQEQYLSQKPTSTSIKTNKVPLRERRGLLAQIVLIPEYEDARDYPNKIKYLIVFIIAFASLAGPFGTSVMLPAIDDIVNDLNTNVSTVNVSVGIYLLSLGIFPLWWSSFSERFGRRSVYMVSFTLFVAFSIGTALSPNIAALIVLRVLQGGSSASVQAVGAGTIADLFIPQERGQAMGLYYLGPLAGPFLAPILGGAVSQAWGWRATQWLLMIISACSFVLITFFLPETLRRVDTIQVAKDLMKKSDNNGSQNEKIHDDFAGADNSSVHDIDGNPIPGTELHQVVSNLSRRSSNARSIVTYMEEQENEGPIIDPVMPSISRLTTNRSAYSQRIHQNYVTDELRKTTSNLTQSNHSQYNNNNNNDNDKWSSVKTNCYDLIIRPLHSIILLKHPPVVLVISFSAISFAAIYFFNMAISYEYARSPYNFSSVILGLMYIPNSVTYFMASIIGGKWNDRLLNRYAQKHGELVPESRLSWNIVVAIILYPMACLIFGWTIKYREFWVIPLIGTALFGFASMLVIGATVTYLVDSLPGKGATGVALNNLIRQILAAIATFIVEPLLRAIGAGVLFSIIAGILLVSSLVLLYLKKRGAFFREHYDVMDLYAKL.

The Cytoplasmic portion of the chain corresponds to 1-141 (MSHSPNLSPQ…ARDYPNKIKY (141 aa)). Positions 38 to 109 (HPIGHHGREQ…KPTSTSIKTN (72 aa)) are disordered. Low complexity-rich tracts occupy residues 53–69 (NTTKTTTTTTNKIHTTT) and 85–99 (DLSSLESQQEQYLSQ). The chain crosses the membrane as a helical span at residues 142–162 (LIVFIIAFASLAGPFGTSVML). Over 163-180 (PAIDDIVNDLNTNVSTVN) the chain is Extracellular. 2 N-linked (GlcNAc...) asparagine glycosylation sites follow: N175 and N180. Residues 181 to 201 (VSVGIYLLSLGIFPLWWSSFS) form a helical membrane-spanning segment. The Cytoplasmic portion of the chain corresponds to 202-215 (ERFGRRSVYMVSFT). Residues 216-236 (LFVAFSIGTALSPNIAALIVL) traverse the membrane as a helical segment. The Extracellular portion of the chain corresponds to 237–240 (RVLQ). Residues 241–261 (GGSSASVQAVGAGTIADLFIP) form a helical membrane-spanning segment. The Cytoplasmic portion of the chain corresponds to 262–268 (QERGQAM). The helical transmembrane segment at 269 to 289 (GLYYLGPLAGPFLAPILGGAV) threads the bilayer. Over 290-296 (SQAWGWR) the chain is Extracellular. Residues 297-317 (ATQWLLMIISACSFVLITFFL) form a helical membrane-spanning segment. Over 318 to 485 (PETLRRVDTI…SIILLKHPPV (168 aa)) the chain is Cytoplasmic. Positions 338–367 (DNNGSQNEKIHDDFAGADNSSVHDIDGNPI) are disordered. The chain crosses the membrane as a helical span at residues 486-506 (VLVISFSAISFAAIYFFNMAI). Over 507–519 (SYEYARSPYNFSS) the chain is Extracellular. N-linked (GlcNAc...) asparagine glycosylation occurs at N516. Residues 520-540 (VILGLMYIPNSVTYFMASIIG) traverse the membrane as a helical segment. At 541-565 (GKWNDRLLNRYAQKHGELVPESRLS) the chain is on the cytoplasmic side. A helical membrane pass occupies residues 566 to 586 (WNIVVAIILYPMACLIFGWTI). Over 587–590 (KYRE) the chain is Extracellular. A helical transmembrane segment spans residues 591 to 611 (FWVIPLIGTALFGFASMLVIG). The Cytoplasmic segment spans residues 612–626 (ATVTYLVDSLPGKGA). Residues 627–647 (TGVALNNLIRQILAAIATFIV) traverse the membrane as a helical segment. Residues 648–653 (EPLLRA) lie on the Extracellular side of the membrane. A helical membrane pass occupies residues 654–674 (IGAGVLFSIIAGILLVSSLVL). The Cytoplasmic segment spans residues 675–697 (LYLKKRGAFFREHYDVMDLYAKL).

Belongs to the major facilitator superfamily. CAR1 family.

The protein localises to the cell membrane. In terms of biological role, MFS antiporter that does not display functional linkage as drug transporter and performs functions that significantly affect biofilm development and virulence. No substrate for transport has been identified yet, but plays an important role in the growth in the host. This is MFS antiporter QDR3 (QDR3) from Candida albicans (strain SC5314 / ATCC MYA-2876) (Yeast).